Reading from the N-terminus, the 417-residue chain is Serine hydroxymethyltransferase (417 aa).

(6S)-5,6,7,8-tetrahydrofolate is bound by residues L121 and 125–127 (GHL). Position 229 is an N6-(pyridoxal phosphate)lysine (K229). Residue 354-356 (SPF) coordinates (6S)-5,6,7,8-tetrahydrofolate.

The protein belongs to the SHMT family. Homodimer. Pyridoxal 5'-phosphate serves as cofactor.

It is found in the cytoplasm. The enzyme catalyses (6R)-5,10-methylene-5,6,7,8-tetrahydrofolate + glycine + H2O = (6S)-5,6,7,8-tetrahydrofolate + L-serine. Its pathway is one-carbon metabolism; tetrahydrofolate interconversion. It participates in amino-acid biosynthesis; glycine biosynthesis; glycine from L-serine: step 1/1. Its function is as follows. Catalyzes the reversible interconversion of serine and glycine with tetrahydrofolate (THF) serving as the one-carbon carrier. This reaction serves as the major source of one-carbon groups required for the biosynthesis of purines, thymidylate, methionine, and other important biomolecules. Also exhibits THF-independent aldolase activity toward beta-hydroxyamino acids, producing glycine and aldehydes, via a retro-aldol mechanism. This chain is Serine hydroxymethyltransferase, found in Azotobacter vinelandii (strain DJ / ATCC BAA-1303).